The primary structure comprises 478 residues: Protein nucleotidyltransferase YdiU (478 aa).

Residues G84, G86, R87, K107, D119, G120, R170, and R177 each coordinate ATP. D246 (proton acceptor) is an active-site residue. Mg(2+)-binding residues include N247 and D256. ATP is bound at residue D256.

Belongs to the SELO family. Requires Mg(2+) as cofactor. It depends on Mn(2+) as a cofactor.

It carries out the reaction L-seryl-[protein] + ATP = 3-O-(5'-adenylyl)-L-seryl-[protein] + diphosphate. It catalyses the reaction L-threonyl-[protein] + ATP = 3-O-(5'-adenylyl)-L-threonyl-[protein] + diphosphate. The enzyme catalyses L-tyrosyl-[protein] + ATP = O-(5'-adenylyl)-L-tyrosyl-[protein] + diphosphate. The catalysed reaction is L-histidyl-[protein] + UTP = N(tele)-(5'-uridylyl)-L-histidyl-[protein] + diphosphate. It carries out the reaction L-seryl-[protein] + UTP = O-(5'-uridylyl)-L-seryl-[protein] + diphosphate. It catalyses the reaction L-tyrosyl-[protein] + UTP = O-(5'-uridylyl)-L-tyrosyl-[protein] + diphosphate. In terms of biological role, nucleotidyltransferase involved in the post-translational modification of proteins. It can catalyze the addition of adenosine monophosphate (AMP) or uridine monophosphate (UMP) to a protein, resulting in modifications known as AMPylation and UMPylation. In Escherichia coli (strain ATCC 8739 / DSM 1576 / NBRC 3972 / NCIMB 8545 / WDCM 00012 / Crooks), this protein is Protein nucleotidyltransferase YdiU.